The following is a 288-amino-acid chain: Dysbindin protein homolog (288 aa).

A coiled-coil region spans residues 147 to 239; it reads AQLQNSSQVL…QRERQAVFDD (93 aa).

The protein belongs to the dysbindin family. Component of the biogenesis of lysosome-related organelles complex-1 (BLOC-1) composed of Blos1, Blos2, Blos3, Blos4, Dysb, Muted, Pldn and Snapin. Interacts with Pldn and Snapin.

Component of the biogenesis of lysosome-related organelles complex-1 (BLOC-1) involved in pigment granule biogenesis and membrane trafficking in synapses. In response to high synaptic activity at neuromuscular junctions, stabilizes Pldn protein levels and, together with Pldn, plays a role in promoting efficient synaptic vesicle recycling and re-formation through early endosomes. This Drosophila melanogaster (Fruit fly) protein is Dysbindin protein homolog.